Consider the following 101-residue polypeptide: Small ribosomal subunit protein uS14 (101 aa).

This sequence belongs to the universal ribosomal protein uS14 family. Part of the 30S ribosomal subunit. Contacts proteins S3 and S10.

In terms of biological role, binds 16S rRNA, required for the assembly of 30S particles and may also be responsible for determining the conformation of the 16S rRNA at the A site. The chain is Small ribosomal subunit protein uS14 from Anaplasma phagocytophilum (strain HZ).